A 133-amino-acid chain; its full sequence is MNAVQDAQDQLTKLIRCWEPIDSDDLSKGHTMSDPVYQLCSYMPSPKDYNKFHVNGVQMDSDDYTTILTMFANQLPGYAVLNVCLQEAFQFHKANHPSQVSLRCLCQRDGCNLPKTLTDFLDFNKGPIPAVNF.

This is an uncharacterized protein from Caenorhabditis elegans.